The primary structure comprises 432 residues: MPVLNLKSDLADADDLETLMAGIGRRARAAGRAMALAPAQTKDLGLRAIAEQIRASAPAILRENARDVSAAQAAGLTNAIIDRLTLDEGRVAAIAEAVEKVAGLADPVGRQLAAFERPNGLLIERISVPLGVVGVIFESRPNVTADAGALCLKAGNAAILRAGSDSHRTATAIAAAMSEGLARAGLPADAIQLVPTRDRAAVGLMLTGLGGCVDVIVPRGGRSLVERVQAEAKVPVFAHLDGICHVYVAEGADLGMARSLLLNSKMRRTGICGAAETLLVDAAVAETHLKPLVEALLESGCAVRGDAATQAADPRVSAATDADWRTEYLDAIISAKVVGGLDAAIAHIEANGSHHTDAIITDDTDAAARFLNEVDSAIVTHNASTQFADGGEFGFGAEIGIATGRMHARGPVGVEQLTTFKYRVHGSGQTRP.

It belongs to the gamma-glutamyl phosphate reductase family.

Its subcellular location is the cytoplasm. The catalysed reaction is L-glutamate 5-semialdehyde + phosphate + NADP(+) = L-glutamyl 5-phosphate + NADPH + H(+). Its pathway is amino-acid biosynthesis; L-proline biosynthesis; L-glutamate 5-semialdehyde from L-glutamate: step 2/2. In terms of biological role, catalyzes the NADPH-dependent reduction of L-glutamate 5-phosphate into L-glutamate 5-semialdehyde and phosphate. The product spontaneously undergoes cyclization to form 1-pyrroline-5-carboxylate. This chain is Gamma-glutamyl phosphate reductase, found in Methylorubrum extorquens (strain PA1) (Methylobacterium extorquens).